The sequence spans 306 residues: Acetyl-coenzyme A carboxylase carboxyl transferase subunit beta (306 aa).

One can recognise a CoA carboxyltransferase N-terminal domain in the interval 27 to 296 (LWHKCPSCEA…PRFVAPVIEP (270 aa)). Cys-31, Cys-34, Cys-50, and Cys-53 together coordinate Zn(2+). The C4-type zinc-finger motif lies at 31–53 (CPSCEAVLYRPELEKTLDVCPKC).

The protein belongs to the AccD/PCCB family. Acetyl-CoA carboxylase is a heterohexamer composed of biotin carboxyl carrier protein (AccB), biotin carboxylase (AccC) and two subunits each of ACCase subunit alpha (AccA) and ACCase subunit beta (AccD). It depends on Zn(2+) as a cofactor.

It localises to the cytoplasm. It catalyses the reaction N(6)-carboxybiotinyl-L-lysyl-[protein] + acetyl-CoA = N(6)-biotinyl-L-lysyl-[protein] + malonyl-CoA. It participates in lipid metabolism; malonyl-CoA biosynthesis; malonyl-CoA from acetyl-CoA: step 1/1. Functionally, component of the acetyl coenzyme A carboxylase (ACC) complex. Biotin carboxylase (BC) catalyzes the carboxylation of biotin on its carrier protein (BCCP) and then the CO(2) group is transferred by the transcarboxylase to acetyl-CoA to form malonyl-CoA. The polypeptide is Acetyl-coenzyme A carboxylase carboxyl transferase subunit beta (Pseudomonas savastanoi pv. phaseolicola (strain 1448A / Race 6) (Pseudomonas syringae pv. phaseolicola (strain 1448A / Race 6))).